Here is a 33-residue protein sequence, read N- to C-terminus: Photosystem II reaction center protein Psb30 (33 aa).

Residues 5 to 25 (VIAQLTVLTLMVVSGPLVIVL) form a helical membrane-spanning segment.

It belongs to the Psb30/Ycf12 family. PSII is composed of 1 copy each of membrane proteins PsbA, PsbB, PsbC, PsbD, PsbE, PsbF, PsbH, PsbI, PsbJ, PsbK, PsbL, PsbM, PsbT, PsbX, PsbY, PsbZ, Psb30/Ycf12, peripheral proteins of the oxygen-evolving complex and a large number of cofactors. It forms dimeric complexes.

The protein localises to the plastid. The protein resides in the chloroplast thylakoid membrane. Its function is as follows. A core subunit of photosystem II (PSII), probably helps stabilize the reaction center. The protein is Photosystem II reaction center protein Psb30 of Pinus koraiensis (Korean pine).